Reading from the N-terminus, the 213-residue chain is Imidazoleglycerol-phosphate dehydratase (213 aa).

Belongs to the imidazoleglycerol-phosphate dehydratase family.

The protein resides in the cytoplasm. The enzyme catalyses D-erythro-1-(imidazol-4-yl)glycerol 3-phosphate = 3-(imidazol-4-yl)-2-oxopropyl phosphate + H2O. It functions in the pathway amino-acid biosynthesis; L-histidine biosynthesis; L-histidine from 5-phospho-alpha-D-ribose 1-diphosphate: step 6/9. This Trichodesmium erythraeum (strain IMS101) protein is Imidazoleglycerol-phosphate dehydratase.